A 349-amino-acid polypeptide reads, in one-letter code: Biotin synthase (349 aa).

Positions 60–287 (GDVELATLLS…KARVRLSAGR (228 aa)) constitute a Radical SAM core domain. Positions 75, 79, and 82 each coordinate [4Fe-4S] cluster. [2Fe-2S] cluster-binding residues include Cys-119, Cys-150, Cys-210, and Arg-282.

The protein belongs to the radical SAM superfamily. Biotin synthase family. As to quaternary structure, homodimer. Requires [4Fe-4S] cluster as cofactor. It depends on [2Fe-2S] cluster as a cofactor.

It catalyses the reaction (4R,5S)-dethiobiotin + (sulfur carrier)-SH + 2 reduced [2Fe-2S]-[ferredoxin] + 2 S-adenosyl-L-methionine = (sulfur carrier)-H + biotin + 2 5'-deoxyadenosine + 2 L-methionine + 2 oxidized [2Fe-2S]-[ferredoxin]. It participates in cofactor biosynthesis; biotin biosynthesis; biotin from 7,8-diaminononanoate: step 2/2. In terms of biological role, catalyzes the conversion of dethiobiotin (DTB) to biotin by the insertion of a sulfur atom into dethiobiotin via a radical-based mechanism. The protein is Biotin synthase of Albidiferax ferrireducens (strain ATCC BAA-621 / DSM 15236 / T118) (Rhodoferax ferrireducens).